A 249-amino-acid chain; its full sequence is Small ribosomal subunit protein uS3y (249 aa).

A KH type-2 domain is found at 21–92 (LNEVLTRELA…SVELYAEKVN (72 aa)). At S212 the chain carries Phosphoserine.

Belongs to the universal ribosomal protein uS3 family.

In Arabidopsis thaliana (Mouse-ear cress), this protein is Small ribosomal subunit protein uS3y (RPS3B).